The sequence spans 199 residues: 5'-deoxynucleotidase YfbR (199 aa).

Substrate is bound by residues 18–19 (RW) and His33. The HD domain occupies 30–142 (VSEHSLQVAM…VKQADALCAY (113 aa)). A divalent metal cation-binding residues include His33, His68, and Asp69. Substrate contacts are provided by residues Asp69, 77–80 (DLPT), and Asp137. Residue Asp137 coordinates a divalent metal cation.

Belongs to the 5DNU family. As to quaternary structure, homodimer. A divalent metal cation is required as a cofactor.

It localises to the cytoplasm. The catalysed reaction is a 2'-deoxyribonucleoside 5'-phosphate + H2O = a 2'-deoxyribonucleoside + phosphate. In terms of biological role, catalyzes the strictly specific dephosphorylation of 2'-deoxyribonucleoside 5'-monophosphates. The sequence is that of 5'-deoxynucleotidase YfbR from Salmonella arizonae (strain ATCC BAA-731 / CDC346-86 / RSK2980).